Consider the following 447-residue polypeptide: Argininosuccinate synthase (447 aa).

Residues 17–25 and alanine 43 each bind ATP; that span reads AFSGGLDTS. Position 99 (tyrosine 99) interacts with L-citrulline. Glycine 129 and threonine 131 together coordinate ATP. 3 residues coordinate L-aspartate: threonine 131, asparagine 135, and aspartate 136. An L-citrulline-binding site is contributed by asparagine 135. Aspartate 136 contacts ATP. L-citrulline contacts are provided by arginine 139 and serine 192. Residue aspartate 194 coordinates ATP. 3 residues coordinate L-citrulline: threonine 201, glutamate 203, and glutamate 280.

It belongs to the argininosuccinate synthase family. Type 2 subfamily. Homotetramer.

Its subcellular location is the cytoplasm. It catalyses the reaction L-citrulline + L-aspartate + ATP = 2-(N(omega)-L-arginino)succinate + AMP + diphosphate + H(+). The protein operates within amino-acid biosynthesis; L-arginine biosynthesis; L-arginine from L-ornithine and carbamoyl phosphate: step 2/3. The polypeptide is Argininosuccinate synthase (Salmonella paratyphi B (strain ATCC BAA-1250 / SPB7)).